Consider the following 175-residue polypeptide: MAPEDTNPQSSHRRTRSTSRSRPTTPLRPSSRSSFRSSARGSVYGDNAAFPLNAFEPAFAELADAVADLEANMMHFQLMHESLARFSESFASFLYGLNMNAFCVDFPEGPITESFKRMKLKEEEMQASSQIPSAWRGDPPISTPTAIYPRTDIRILIVKSGGYTWWKRRASWGSG.

Residues 1-39 form a disordered region; sequence MAPEDTNPQSSHRRTRSTSRSRPTTPLRPSSRSSFRSSA. Residues 20–39 show a composition bias toward low complexity; that stretch reads RSRPTTPLRPSSRSSFRSSA.

The protein belongs to the DASH complex DAM1 family. Component of the DASH complex consisting of ASK1, DAD1, DAD2, DAD3, DAD4, DAM1, DUO1, HSK3, SPC19 and SPC34, with a stoichiometry of one copy of each subunit per complex. Multiple DASH complexes oligomerize to form a ring that encircles spindle microtubules and organizes the rod-like NDC80 complexes of the outer kinetochore. DASH complex oligomerization strengthens microtubule attachments. On cytoplasmic microtubules, DASH complexes appear to form patches instead of rings.

The protein resides in the chromosome. It is found in the centromere. The protein localises to the kinetochore. It localises to the cytoplasm. Its subcellular location is the cytoskeleton. The protein resides in the spindle. It is found in the nucleus. Functionally, component of the DASH complex that connects microtubules with kinetochores and couples microtubule depolymerisation to chromosome movement; it is involved in retrieving kinetochores to the spindle poles before their re-orientation on the spindle in early mitosis and allows microtubule depolymerization to pull chromosomes apart and resist detachment during anaphase. Kinetochores, consisting of a centromere-associated inner segment and a microtubule-contacting outer segment, play a crucial role in chromosome segregation by mediating the physical connection between centromeric DNA and microtubules. Kinetochores also serve as an input point for the spindle assembly checkpoint, which delays anaphase until all chromosomes have bioriented on the mitotic spindle. The sequence is that of DASH complex subunit DAM1 from Chaetomium thermophilum (strain DSM 1495 / CBS 144.50 / IMI 039719) (Thermochaetoides thermophila).